The chain runs to 227 residues: Orotidine 5'-phosphate decarboxylase (227 aa).

Substrate-binding positions include Asp8, Lys30, 58–67, Thr117, Arg177, Gln186, Gly206, and Arg207; that span reads DLKVHDIPNT. The Proton donor role is filled by Lys60.

It belongs to the OMP decarboxylase family. Type 1 subfamily. As to quaternary structure, homodimer.

The catalysed reaction is orotidine 5'-phosphate + H(+) = UMP + CO2. It functions in the pathway pyrimidine metabolism; UMP biosynthesis via de novo pathway; UMP from orotate: step 2/2. Functionally, catalyzes the decarboxylation of orotidine 5'-monophosphate (OMP) to uridine 5'-monophosphate (UMP). The chain is Orotidine 5'-phosphate decarboxylase from Campylobacter fetus subsp. fetus (strain 82-40).